The sequence spans 630 residues: Arginine--tRNA ligase (630 aa).

Residues 120 to 130 carry the 'HIGH' region motif; that stretch reads ANPVHPLHIGH.

This sequence belongs to the class-I aminoacyl-tRNA synthetase family.

The protein resides in the cytoplasm. It carries out the reaction tRNA(Arg) + L-arginine + ATP = L-arginyl-tRNA(Arg) + AMP + diphosphate. In Pyrobaculum aerophilum (strain ATCC 51768 / DSM 7523 / JCM 9630 / CIP 104966 / NBRC 100827 / IM2), this protein is Arginine--tRNA ligase.